A 184-amino-acid polypeptide reads, in one-letter code: MKNITDSFVSLGHWSSAGSFGFNTDILATNPINLSVVLGVLIFFGKGVLSDLLDNRKQRILNTIRNSEELRGGAIEQLEKARARLRKVEIEADQFRVNGYSEIEREKLNLINSTYKTLEQLENYKNETIHFEQQRAINQVRQRVFQQALQGALGTLNSCLTNELHLRTISANIGMFGAMKEITN.

Residues 27-49 (LATNPINLSVVLGVLIFFGKGVL) form a helical membrane-spanning segment.

Belongs to the ATPase B chain family. F-type ATPases have 2 components, F(1) - the catalytic core - and F(0) - the membrane proton channel. F(1) has five subunits: alpha(3), beta(3), gamma(1), delta(1), epsilon(1). F(0) has four main subunits: a(1), b(1), b'(1) and c(10-14). The alpha and beta chains form an alternating ring which encloses part of the gamma chain. F(1) is attached to F(0) by a central stalk formed by the gamma and epsilon chains, while a peripheral stalk is formed by the delta, b and b' chains.

It is found in the plastid. Its subcellular location is the chloroplast thylakoid membrane. Functionally, f(1)F(0) ATP synthase produces ATP from ADP in the presence of a proton or sodium gradient. F-type ATPases consist of two structural domains, F(1) containing the extramembraneous catalytic core and F(0) containing the membrane proton channel, linked together by a central stalk and a peripheral stalk. During catalysis, ATP synthesis in the catalytic domain of F(1) is coupled via a rotary mechanism of the central stalk subunits to proton translocation. Component of the F(0) channel, it forms part of the peripheral stalk, linking F(1) to F(0). The polypeptide is ATP synthase subunit b, chloroplastic (Populus alba (White poplar)).